Here is a 292-residue protein sequence, read N- to C-terminus: Glyoxylase B2 (292 aa).

Residues histidine 72, histidine 74, aspartate 76, histidine 77, histidine 148, and aspartate 166 each contribute to the Zn(2+) site. Residues 175-181, 208-210, and 284-287 contribute to the substrate site; these read TARCDFP, HDY, and KIPL. Residue histidine 208 coordinates Zn(2+).

Belongs to the metallo-beta-lactamase superfamily. Glyoxalase II family. Requires Zn(2+) as cofactor.

The polypeptide is Glyoxylase B2 (gloB2) (Dictyostelium discoideum (Social amoeba)).